Reading from the N-terminus, the 204-residue chain is FMN-dependent NADH:quinone oxidoreductase 2 (204 aa).

Residues serine 10 and 16–18 each bind FMN; that span reads SIS.

Belongs to the azoreductase type 1 family. In terms of assembly, homodimer. FMN is required as a cofactor.

The enzyme catalyses 2 a quinone + NADH + H(+) = 2 a 1,4-benzosemiquinone + NAD(+). The catalysed reaction is N,N-dimethyl-1,4-phenylenediamine + anthranilate + 2 NAD(+) = 2-(4-dimethylaminophenyl)diazenylbenzoate + 2 NADH + 2 H(+). Its function is as follows. Quinone reductase that provides resistance to thiol-specific stress caused by electrophilic quinones. In terms of biological role, also exhibits azoreductase activity. Catalyzes the reductive cleavage of the azo bond in aromatic azo compounds to the corresponding amines. This is FMN-dependent NADH:quinone oxidoreductase 2 from Jannaschia sp. (strain CCS1).